Here is a 316-residue protein sequence, read N- to C-terminus: Thymidylate synthase (316 aa).

DUMP contacts are provided by residues arginine 23 and 178 to 179 (RR). Cysteine 198 acts as the Nucleophile in catalysis. DUMP-binding positions include 218–221 (RSAD), asparagine 229, and 259–261 (HLY). Residue aspartate 221 participates in (6R)-5,10-methylene-5,6,7,8-tetrahydrofolate binding. Alanine 315 contributes to the (6R)-5,10-methylene-5,6,7,8-tetrahydrofolate binding site.

The protein belongs to the thymidylate synthase family. Bacterial-type ThyA subfamily. Homodimer.

Its subcellular location is the cytoplasm. It catalyses the reaction dUMP + (6R)-5,10-methylene-5,6,7,8-tetrahydrofolate = 7,8-dihydrofolate + dTMP. It participates in pyrimidine metabolism; dTTP biosynthesis. In terms of biological role, catalyzes the reductive methylation of 2'-deoxyuridine-5'-monophosphate (dUMP) to 2'-deoxythymidine-5'-monophosphate (dTMP) while utilizing 5,10-methylenetetrahydrofolate (mTHF) as the methyl donor and reductant in the reaction, yielding dihydrofolate (DHF) as a by-product. This enzymatic reaction provides an intracellular de novo source of dTMP, an essential precursor for DNA biosynthesis. This is Thymidylate synthase from Lacticaseibacillus casei (Lactobacillus casei).